The chain runs to 513 residues: Probable tubulin polyglutamylase ttll-15 (513 aa).

One can recognise a TTL domain in the interval 73–411 (VTGSYESAHT…STPITKEADI (339 aa)). ATP-binding positions include 216-219 (QKFV), lysine 229, and aspartate 231.

This sequence belongs to the tubulin--tyrosine ligase family. In terms of tissue distribution, expressed in hypodermis and pharyngeal muscles.

Its function is as follows. Probable polyglutamylase that forms polyglutamate side chains on tubulin. Probably acts when complexed with other proteins. Appears to be dispensable for polar spindle formation in dividing embryonic cells, for cilia-dependent osmotic avoidance and for male mating behavior. Regulates microtubule dynamics in uterine muscle cells. This chain is Probable tubulin polyglutamylase ttll-15, found in Caenorhabditis elegans.